The sequence spans 223 residues: ATP-dependent dethiobiotin synthetase BioD (223 aa).

T16 is a binding site for Mg(2+). K37 is an active-site residue. S41 contacts substrate. The Mg(2+) site is built by D50 and E111. Residues D50, 111–114 (EGAG), and 171–172 (NR) contribute to the ATP site.

The protein belongs to the dethiobiotin synthetase family. In terms of assembly, homodimer. Mg(2+) serves as cofactor.

It localises to the cytoplasm. The enzyme catalyses (7R,8S)-7,8-diammoniononanoate + CO2 + ATP = (4R,5S)-dethiobiotin + ADP + phosphate + 3 H(+). The protein operates within cofactor biosynthesis; biotin biosynthesis; biotin from 7,8-diaminononanoate: step 1/2. Functionally, catalyzes a mechanistically unusual reaction, the ATP-dependent insertion of CO2 between the N7 and N8 nitrogen atoms of 7,8-diaminopelargonic acid (DAPA, also called 7,8-diammoniononanoate) to form a ureido ring. The chain is ATP-dependent dethiobiotin synthetase BioD from Anaeromyxobacter dehalogenans (strain 2CP-C).